A 417-amino-acid chain; its full sequence is Serine hydroxymethyltransferase 1 (417 aa).

(6S)-5,6,7,8-tetrahydrofolate is bound by residues L121 and 125 to 127 (GHL). N6-(pyridoxal phosphate)lysine is present on K229. Residue 354–356 (SPF) participates in (6S)-5,6,7,8-tetrahydrofolate binding.

The protein belongs to the SHMT family. As to quaternary structure, homodimer. The cofactor is pyridoxal 5'-phosphate.

The protein localises to the cytoplasm. The catalysed reaction is (6R)-5,10-methylene-5,6,7,8-tetrahydrofolate + glycine + H2O = (6S)-5,6,7,8-tetrahydrofolate + L-serine. Its pathway is one-carbon metabolism; tetrahydrofolate interconversion. It participates in amino-acid biosynthesis; glycine biosynthesis; glycine from L-serine: step 1/1. In terms of biological role, catalyzes the reversible interconversion of serine and glycine with tetrahydrofolate (THF) serving as the one-carbon carrier. This reaction serves as the major source of one-carbon groups required for the biosynthesis of purines, thymidylate, methionine, and other important biomolecules. Also exhibits THF-independent aldolase activity toward beta-hydroxyamino acids, producing glycine and aldehydes, via a retro-aldol mechanism. The sequence is that of Serine hydroxymethyltransferase 1 from Pseudomonas syringae pv. syringae (strain B728a).